Consider the following 630-residue polypeptide: tRNA uridine 5-carboxymethylaminomethyl modification enzyme MnmG (630 aa).

G13 to G18 contacts FAD. Residue G273–F287 participates in NAD(+) binding.

It belongs to the MnmG family. As to quaternary structure, homodimer. Heterotetramer of two MnmE and two MnmG subunits. FAD is required as a cofactor.

The protein resides in the cytoplasm. NAD-binding protein involved in the addition of a carboxymethylaminomethyl (cmnm) group at the wobble position (U34) of certain tRNAs, forming tRNA-cmnm(5)s(2)U34. This is tRNA uridine 5-carboxymethylaminomethyl modification enzyme MnmG from Pseudomonas entomophila (strain L48).